A 194-amino-acid chain; its full sequence is Recombination protein RecR (194 aa).

The segment at 55–70 (CRECGNLAEGELCPIC) adopts a C4-type zinc-finger fold. A Toprim domain is found at 78 to 171 (SLLAVVESVA…RVTRPAYGLP (94 aa)).

It belongs to the RecR family.

Its function is as follows. May play a role in DNA repair. It seems to be involved in an RecBC-independent recombinational process of DNA repair. It may act with RecF and RecO. In Thermus thermophilus (strain ATCC 27634 / DSM 579 / HB8), this protein is Recombination protein RecR.